We begin with the raw amino-acid sequence, 218 residues long: Adenylate kinase (218 aa).

An ATP-binding site is contributed by 10–15; the sequence is GAGKGT. Residues 30–59 form an NMP region; that stretch reads STGDMLRAAVKAATPLGLAAKKIMDEGGLV. AMP is bound by residues Thr-31, Arg-36, 57-59, 85-88, and Gln-92; these read GLV and GFPR. Residues 122–159 form an LID region; it reads GRRVHLASGRTYHVTFNPPAVPDKDDLTGEPLVQRNDD. Residues Arg-123 and 132-133 each bind ATP; that span reads TY. The AMP site is built by Arg-156 and Arg-167. Residue Gly-203 participates in ATP binding.

The protein belongs to the adenylate kinase family. As to quaternary structure, monomer.

It localises to the cytoplasm. It carries out the reaction AMP + ATP = 2 ADP. It participates in purine metabolism; AMP biosynthesis via salvage pathway; AMP from ADP: step 1/1. In terms of biological role, catalyzes the reversible transfer of the terminal phosphate group between ATP and AMP. Plays an important role in cellular energy homeostasis and in adenine nucleotide metabolism. This Chlorobaculum tepidum (strain ATCC 49652 / DSM 12025 / NBRC 103806 / TLS) (Chlorobium tepidum) protein is Adenylate kinase.